We begin with the raw amino-acid sequence, 301 residues long: Oxygen-dependent coproporphyrinogen-III oxidase (301 aa).

The tract at residues 49 to 58 is important for dimerization; sequence VMVDGAVIEK. Serine 93 provides a ligand contact to substrate. Catalysis depends on histidine 107, which acts as the Proton donor. Residues 109 to 111 and 259 to 261 contribute to the substrate site; these read NVR and GGR. The tract at residues 241–276 is important for dimerization; that stretch reads YAEFNLVIDRGTKFGLQSGGRTESILISLPPRARWG.

It belongs to the aerobic coproporphyrinogen-III oxidase family. In terms of assembly, homodimer.

The protein localises to the cytoplasm. It catalyses the reaction coproporphyrinogen III + O2 + 2 H(+) = protoporphyrinogen IX + 2 CO2 + 2 H2O. The protein operates within porphyrin-containing compound metabolism; protoporphyrin-IX biosynthesis; protoporphyrinogen-IX from coproporphyrinogen-III (O2 route): step 1/1. Its function is as follows. Involved in the heme biosynthesis. Catalyzes the aerobic oxidative decarboxylation of propionate groups of rings A and B of coproporphyrinogen-III to yield the vinyl groups in protoporphyrinogen-IX. This chain is Oxygen-dependent coproporphyrinogen-III oxidase, found in Leishmania major.